The primary structure comprises 676 residues: DNA ligase (676 aa).

NAD(+) is bound by residues 35-39, 84-85, and glutamate 118; these read DAEYD and SL. The active-site N6-AMP-lysine intermediate is lysine 120. 4 residues coordinate NAD(+): arginine 141, glutamate 176, lysine 284, and lysine 308. Zn(2+)-binding residues include cysteine 402, cysteine 405, cysteine 420, and cysteine 426. The region spanning 595–676 is the BRCT domain; it reads SYLSLIHGKI…WLQYTQSSEN (82 aa).

This sequence belongs to the NAD-dependent DNA ligase family. LigA subfamily. It depends on Mg(2+) as a cofactor. The cofactor is Mn(2+).

It carries out the reaction NAD(+) + (deoxyribonucleotide)n-3'-hydroxyl + 5'-phospho-(deoxyribonucleotide)m = (deoxyribonucleotide)n+m + AMP + beta-nicotinamide D-nucleotide.. In terms of biological role, DNA ligase that catalyzes the formation of phosphodiester linkages between 5'-phosphoryl and 3'-hydroxyl groups in double-stranded DNA using NAD as a coenzyme and as the energy source for the reaction. It is essential for DNA replication and repair of damaged DNA. The chain is DNA ligase from Ehrlichia chaffeensis (strain ATCC CRL-10679 / Arkansas).